The sequence spans 61 residues: Large ribosomal subunit protein uL29 (61 aa).

Belongs to the universal ribosomal protein uL29 family.

This is Large ribosomal subunit protein uL29 from Xanthomonas campestris pv. campestris (strain 8004).